The sequence spans 702 residues: Glucoamylase (702 aa).

Residues 1 to 21 form the signal peptide; that stretch reads MSRKLIKYLPLLVLASSVLSG. Residue cysteine 22 is the site of N-palmitoyl cysteine attachment. A lipid anchor (S-diacylglycerol cysteine) is attached at cysteine 22. Tryptophan 342 contacts substrate. Glutamate 452 serves as the catalytic Proton acceptor. The Proton donor role is filled by glutamate 455.

Belongs to the glycosyl hydrolase 15 family.

The protein localises to the cell membrane. It catalyses the reaction Hydrolysis of terminal (1-&gt;4)-linked alpha-D-glucose residues successively from non-reducing ends of the chains with release of beta-D-glucose.. In terms of biological role, CGA has typical kinetic properties for a glucoamylase, but this bacterial enzyme had higher isomaltose-hydrolyzing activity than other eukaryotic glucoamylases. This Clostridium sp. (strain G0005) protein is Glucoamylase (cga).